The primary structure comprises 574 residues: NEDD4-binding protein 2-like 2 (574 aa).

Disordered regions lie at residues 82 to 110, 127 to 161, 182 to 204, and 542 to 574; these read HKEM…LAPA, YKPP…QKFN, ENEN…QTLS, and TQKS…TDDY. Composition is skewed to basic and acidic residues over residues 129–141 and 149–161; these read PPEK…RKNE and DSKR…QKFN. Residues 162-196 are a coiled coil; sequence SKKLEIDTELSQFYKEIEELENENEASQGSCKEPE. Polar residues predominate over residues 563–574; it reads GSHSQVSITDDY.

This chain is NEDD4-binding protein 2-like 2 (N4bp2l2), found in Rattus norvegicus (Rat).